A 430-amino-acid polypeptide reads, in one-letter code: tRNA(Ile)-lysidine synthase (430 aa).

24 to 29 is a binding site for ATP; sequence SGGLDS.

The protein belongs to the tRNA(Ile)-lysidine synthase family.

It is found in the cytoplasm. The enzyme catalyses cytidine(34) in tRNA(Ile2) + L-lysine + ATP = lysidine(34) in tRNA(Ile2) + AMP + diphosphate + H(+). Ligates lysine onto the cytidine present at position 34 of the AUA codon-specific tRNA(Ile) that contains the anticodon CAU, in an ATP-dependent manner. Cytidine is converted to lysidine, thus changing the amino acid specificity of the tRNA from methionine to isoleucine. The protein is tRNA(Ile)-lysidine synthase of Haemophilus influenzae (strain PittGG).